The following is a 291-amino-acid chain: Flavin-dependent thymidylate synthase (291 aa).

Residues 31 to 241 (GFVRVVDYMG…PMVHAAFVEY (211 aa)) enclose the ThyX domain. Residues Ser-77, 100–102 (RHR), and Glu-108 each bind FAD. DUMP is bound by residues 97-100 (QWVR), 108-112 (EYSAR), and Arg-180. Residues 100–110 (RHRTASINEYS) carry the ThyX motif motif. 196 to 198 (NLH) contacts FAD. Arg-207 serves as a coordination point for dUMP. The active-site Involved in ionization of N3 of dUMP, leading to its activation is the Arg-207.

It belongs to the thymidylate synthase ThyX family. In terms of assembly, homotetramer. The cofactor is FAD.

It carries out the reaction dUMP + (6R)-5,10-methylene-5,6,7,8-tetrahydrofolate + NADPH + H(+) = dTMP + (6S)-5,6,7,8-tetrahydrofolate + NADP(+). It functions in the pathway pyrimidine metabolism; dTTP biosynthesis. In terms of biological role, catalyzes the reductive methylation of 2'-deoxyuridine-5'-monophosphate (dUMP) to 2'-deoxythymidine-5'-monophosphate (dTMP) while utilizing 5,10-methylenetetrahydrofolate (mTHF) as the methyl donor, and NADPH and FADH(2) as the reductant. The sequence is that of Flavin-dependent thymidylate synthase from Anaplasma marginale (strain St. Maries).